The primary structure comprises 204 residues: Holliday junction branch migration complex subunit RuvA (204 aa).

A domain I region spans residues 1-67 (MIAFLSGHLV…ETELVLYGFG (67 aa)). Positions 68 to 146 (SPAERDLFVE…HWRQGMGVAD (79 aa)) are domain II. The tract at residues 147–157 (QPLAGGPPMPI) is flexible linker. Residues 157–204 (IREEVEMALLALGYSTQEIQAALQALPTHPRPTEDWLRDAITYLSQQP) are domain III.

Belongs to the RuvA family. In terms of assembly, homotetramer. Forms an RuvA(8)-RuvB(12)-Holliday junction (HJ) complex. HJ DNA is sandwiched between 2 RuvA tetramers; dsDNA enters through RuvA and exits via RuvB. An RuvB hexamer assembles on each DNA strand where it exits the tetramer. Each RuvB hexamer is contacted by two RuvA subunits (via domain III) on 2 adjacent RuvB subunits; this complex drives branch migration. In the full resolvosome a probable DNA-RuvA(4)-RuvB(12)-RuvC(2) complex forms which resolves the HJ.

It is found in the cytoplasm. Its function is as follows. The RuvA-RuvB-RuvC complex processes Holliday junction (HJ) DNA during genetic recombination and DNA repair, while the RuvA-RuvB complex plays an important role in the rescue of blocked DNA replication forks via replication fork reversal (RFR). RuvA specifically binds to HJ cruciform DNA, conferring on it an open structure. The RuvB hexamer acts as an ATP-dependent pump, pulling dsDNA into and through the RuvAB complex. HJ branch migration allows RuvC to scan DNA until it finds its consensus sequence, where it cleaves and resolves the cruciform DNA. The polypeptide is Holliday junction branch migration complex subunit RuvA (Synechococcus sp. (strain JA-2-3B'a(2-13)) (Cyanobacteria bacterium Yellowstone B-Prime)).